The sequence spans 1556 residues: uncharacterized protein (1556 aa).

Ser2 is subject to N-acetylserine. Positions 145–156 are enriched in basic and acidic residues; that stretch reads NQLENRKSLERK. The tract at residues 145–170 is disordered; it reads NQLENRKSLERKPSRKRRKKNSNVND. In terms of domain architecture, Helicase ATP-binding spans 378–583; it reads SGDYPVCAKG…MIMSYLKLHP (206 aa). 391–398 lines the ATP pocket; that stretch reads EEMGLGKT. Residue Ser810 is modified to Phosphoserine. The segment at 810 to 850 is disordered; the sequence is SEDEDEHMDERFGEKETSSGDESDREINGAKNHDNHNNDGM. 2 stretches are compositionally biased toward basic and acidic residues: residues 817–827 and 834–846; these read MDERFGEKETS and REIN…DNHN. The RING-type zinc finger occupies 1239–1277; the sequence is CSICLGEVEIGAIIKCGHYFCKSCILTWLRAHSKCPICK. A compositionally biased stretch (basic and acidic residues) spans 1297-1309; sequence REKEIQEPRREGA. Disordered regions lie at residues 1297 to 1319 and 1508 to 1534; these read REKE…SNEN and EKSK…AKFE. Over residues 1310–1319 the composition is skewed to low complexity; the sequence is DSSQDNSNEN. The region spanning 1363–1531 is the Helicase C-terminal domain; that stretch reads KLISYLRLKS…ETDNEESDDA (169 aa). The segment covering 1508–1518 has biased composition (basic and acidic residues); that stretch reads EKSKKGDKYDE. Residues 1519–1529 show a composition bias toward acidic residues; sequence AQDETDNEESD.

It belongs to the SNF2/RAD54 helicase family.

It localises to the nucleus. Its function is as follows. Is probably involved in a pathway contributing to genomic integrity. This is an uncharacterized protein from Saccharomyces cerevisiae (strain ATCC 204508 / S288c) (Baker's yeast).